A 556-amino-acid chain; its full sequence is Formate--tetrahydrofolate ligase (556 aa).

65 to 72 (TPAGEGKS) lines the ATP pocket.

It belongs to the formate--tetrahydrofolate ligase family.

The enzyme catalyses (6S)-5,6,7,8-tetrahydrofolate + formate + ATP = (6R)-10-formyltetrahydrofolate + ADP + phosphate. The protein operates within one-carbon metabolism; tetrahydrofolate interconversion. This Enterococcus faecalis (strain ATCC 700802 / V583) protein is Formate--tetrahydrofolate ligase.